Consider the following 1649-residue polypeptide: Cortactin-binding protein 2 (1649 aa).

Residues 1–23 (MATDGASCEPDLSRAPEDAAGAA) form a disordered region. A coiled-coil region spans residues 119-276 (RKMQERMSAQ…EQLKRGSDSK (158 aa)). 2 disordered regions span residues 366–440 (IGVS…LHPG) and 454–478 (GNAN…SPTS). Composition is skewed to low complexity over residues 368–379 (VSVPAFPPSSAS) and 386–396 (PSTGSTPDPTS). The span at 411 to 422 (QTPGITPQNSQA) shows a compositional bias: polar residues. Arg-498 carries the asymmetric dimethylarginine modification. The tract at residues 499 to 616 (FTGPQAGAPP…SSPQLPPKPS (118 aa)) is disordered. The span at 583-593 (TVASPPSSLPQ) shows a compositional bias: polar residues. ANK repeat units follow at residues 709–739 (GRPT…DINY), 743–772 (DGHS…QVNA), 776–805 (NGFT…NINH), 809–838 (GGQT…DRSV), and 842–871 (DGWT…PAHG). The disordered stretch occupies residues 872 to 897 (NSFSEEESESGVFDLDGGEESPEGKS). The ANK 6 repeat unit spans residues 912–942 (EGWTAAHIAASKGFKNCLEILCRHGGLETER). The segment at 1444 to 1482 (SCSKKKGESGAWRRVNTSPRRKSSRFSLPTWNKPDLSNE) is disordered. Ser-1524 is modified (phosphoserine). The segment at 1616 to 1649 (PRSKVTQCSQNTKRSSSSSNTRQIEINNNSKEEN) is disordered. The span at 1624–1638 (SQNTKRSSSSSNTRQ) shows a compositional bias: low complexity. The segment covering 1639-1649 (IEINNNSKEEN) has biased composition (polar residues).

As to quaternary structure, interacts with CTTN/cortactin SH3 domain. Interacts with STRN, STRN4/zinedin and MOB4/phocein; this interactions mediate the association with the STRIPAK core complex and may regulate dendritic spine distribution of the STRIPAK complex in hippocampal neurons. Activation of glutamate receptors weakens the interaction with STRN and STRN4.

It is found in the cytoplasm. Its subcellular location is the cell cortex. The protein resides in the cell projection. It localises to the dendritic spine. Regulates the dendritic spine distribution of CTTN/cortactin in hippocampal neurons, and thus controls dendritic spinogenesis and dendritic spine maintenance. Associates with the striatin-interacting phosphatase and kinase (STRIPAK) core complex to regulate dendritic spine distribution of the STRIPAK complex in hippocampal neurons. This Aotus nancymaae (Ma's night monkey) protein is Cortactin-binding protein 2 (CTTNBP2).